The following is a 1627-amino-acid chain: Type III effector DspE (1627 aa).

Polar residues-rich tracts occupy residues Ala22–Gln44 and Gly59–Leu74. 2 disordered regions span residues Ala22 to Gln102 and Gln436 to Trp464. 3 short sequence motifs (wxxxE) span residues Trp464 to Asp468, Trp514 to Glu520, and Trp660 to Asp667.

Belongs to the AvrE family.

The protein localises to the secreted. It is found in the host cell. Functionally, major virulence factor that may function as a water- and solute-permeable channel dedicated to creating osmotic/water potential perturbation and a water- and nutrient-rich apoplast in which bacteria multiply within the infected plant tissues. Required for plant cell death in N.benthamiana leaves and leaf cell death in S.tuberosum. Essential for pathogenicity. Does not suppress callose formation. The polypeptide is Type III effector DspE (Pectobacterium carotovorum (Erwinia carotovora)).